Here is a 1639-residue protein sequence, read N- to C-terminus: Protein GFS12 (1639 aa).

A Protein kinase 1 domain is found at 206 to 294 (LEEKSKLRCL…IRPSNILLSD (89 aa)). One can recognise a BEACH domain in the interval 336-608 (LKISSHLDWQ…FHGFGVDNKR (273 aa)). One can recognise a Protein kinase 2 domain in the interval 715–788 (IAGDIFSIGC…AKSLLDSPYF (74 aa)). WD repeat units lie at residues 1290-1333 (AHHG…CVSS) and 1336-1373 (AHEE…LISL). A compositionally biased stretch (low complexity) spans 1377–1398 (SPSDQDQASSDPSSKNNSNPCN). Positions 1377-1399 (SPSDQDQASSDPSSKNNSNPCNR) are disordered. 3 WD repeats span residues 1465–1499 (ALCS…RLFD), 1511–1549 (AHDG…TPQP), and 1609–1639 (RVKS…RICC).

The protein belongs to the protein kinase superfamily. Tyr protein kinase family. In terms of assembly, interacts (via protein kinase 2 domain) with BCHC1 (via PH-BEACH domain). Weakly expressed in the cotyledons of germinating seedlings. Restricted to the vascular tissues of cotyledons. Detected in root tips, apical meristem, young flower buds and receptacles.

Its function is as follows. May act predominantly to suppress BCHC1, which itself is a negative factor in protein storage vacuole (PSV) trafficking regulation and plant effector triggered immunity (ETI). Required for ETI, but not for cell death. The sequence is that of Protein GFS12 from Arabidopsis thaliana (Mouse-ear cress).